The chain runs to 523 residues: Sorting nexin-2 (523 aa).

Positions 1–104 (MAAEREPPPL…EPSPAVTPVT (104 aa)) are disordered. 2 stretches are compositionally biased toward low complexity: residues 27–50 (LFTS…LPAE) and 93–104 (SSEPSPAVTPVT). The residue at position 97 (Ser97) is a Phosphoserine. Residues Thr101 and Thr104 each carry the phosphothreonine modification. Phosphoserine occurs at positions 117 and 119. Positions 140–269 (FDIEIGVSDP…QFLESSELPR (130 aa)) constitute a PX domain. A 1,2-diacyl-sn-glycero-3-phospho-(1D-myo-inositol-3-phosphate)-binding residues include Arg183, Ser185, Lys211, and Arg235. Position 185 is a phosphoserine (Ser185). The tract at residues 260–523 (QFLESSELPR…AFLPEAKAIA (264 aa)) is interaction with RhoG. Ser277 carries the phosphoserine modification. A membrane-binding amphipathic helix region spans residues 278–295 (GAGILRMVNKAADAVNKM). A BAR domain is found at 299–523 (MNESDAWFEE…AFLPEAKAIA (225 aa)). Residue Lys473 is modified to N6-acetyllysine.

Belongs to the sorting nexin family. Predominantly forms heterodimers with BAR domain-containing sorting nexins SNX5, SNX6 and SNX32; can self-associate to form homodimers. The heterodimers are proposed to self-assemble into helical arrays on the membrane to stabilize and expand local membrane curvature underlying endosomal tubule formation. Thought to be a component of the originally described retromer complex (also called SNX-BAR retromer) which is a pentamer containing the heterotrimeric retromer cargo-selective complex (CSC), also described as vacuolar protein sorting subcomplex (VPS), and a heterodimeric membrane-deforming subcomplex formed between SNX1 or SNX2 and SNX5 or SNX6 (also called SNX-BAR subcomplex); the respective CSC and SNX-BAR subcomplexes associate with low affinity. Interacts with SNX5, SNX6, SNX32, VPS26A, VPS29, VPS35, FNBP1, KALRN, RHOG (GDP-bound form).

The protein localises to the early endosome membrane. Its subcellular location is the cell projection. It localises to the lamellipodium. In terms of biological role, involved in several stages of intracellular trafficking. Interacts with membranes containing phosphatidylinositol 3-phosphate (PtdIns(3P)) or phosphatidylinositol 3,5-bisphosphate (PtdIns(3,5)P2). Acts in part as component of the retromer membrane-deforming SNX-BAR subcomplex. The SNX-BAR retromer mediates retrograde transport of cargo proteins from endosomes to the trans-Golgi network (TGN) and is involved in endosome-to-plasma membrane transport for cargo protein recycling. The SNX-BAR subcomplex functions to deform the donor membrane into a tubular profile called endosome-to-TGN transport carrier (ETC). Can sense membrane curvature and has in vitro vesicle-to-membrane remodeling activity. Required for retrograde endosome-to-TGN transport of TGN38. Promotes KALRN- and RHOG-dependent but retromer-independent membrane remodeling such as lamellipodium formation; the function is dependent on GEF activity of KALRN. In Macaca fascicularis (Crab-eating macaque), this protein is Sorting nexin-2 (SNX2).